Reading from the N-terminus, the 138-residue chain is Small ribosomal subunit protein uS11c (138 aa).

The segment at 1-21 is disordered; that stretch reads MTKAIQKIGSRRNGRIASRKN. Residues 9–21 are compositionally biased toward basic residues; it reads GSRRNGRIASRKN.

Belongs to the universal ribosomal protein uS11 family. As to quaternary structure, part of the 30S ribosomal subunit.

Its subcellular location is the plastid. It is found in the chloroplast. The protein is Small ribosomal subunit protein uS11c of Ceratophyllum demersum (Rigid hornwort).